A 312-amino-acid polypeptide reads, in one-letter code: Prephenate dehydratase (312 aa).

In terms of domain architecture, Prephenate dehydratase spans G3–R194. The region spanning S208–P285 is the ACT domain. Residues G291–P312 are disordered.

As to quaternary structure, homodimer.

It carries out the reaction prephenate + H(+) = 3-phenylpyruvate + CO2 + H2O. It functions in the pathway amino-acid biosynthesis; L-phenylalanine biosynthesis; phenylpyruvate from prephenate: step 1/1. The sequence is that of Prephenate dehydratase (pheA) from Mycolicibacterium vanbaalenii (strain DSM 7251 / JCM 13017 / BCRC 16820 / KCTC 9966 / NRRL B-24157 / PYR-1) (Mycobacterium vanbaalenii).